The following is a 153-amino-acid chain: Insulin-like growth factor 1.S (153 aa).

Disulfide bonds link cysteine 29–cysteine 38, cysteine 54–cysteine 96, cysteine 66–cysteine 109, and cysteine 100–cysteine 109. Residues 49–77 form a b region; sequence GPETLCGAELVDTLQFVCGDRGFYFSKPT. Positions 78 to 89 are c; sequence GYGSNNRRSHHR. An a region spans residues 90 to 110; the sequence is GIVDECCFQSCDFRRLEMYCA. The tract at residues 111 to 118 is d; sequence PAKQAKSA. Residues 119–153 constitute a propeptide, e peptide; that stretch reads RSVRTQRHTDMPKAQKEVHPKNTSRGNTGSRGFRM. The segment at 119–153 is disordered; it reads RSVRTQRHTDMPKAQKEVHPKNTSRGNTGSRGFRM. A compositionally biased stretch (basic and acidic residues) spans 125–138; it reads RHTDMPKAQKEVHP. Positions 139–153 are enriched in polar residues; the sequence is KNTSRGNTGSRGFRM.

Belongs to the insulin family. In terms of tissue distribution, expressed in adult liver, lung, heart, kidney and peritoneal fat.

Its subcellular location is the secreted. Functionally, the insulin-like growth factors, isolated from plasma, are structurally and functionally related to insulin but have a much higher growth-promoting activity. Promotes head development by inhibiting Wnt signaling during embryogenesis. Acts as a ligand for IGF1R. Binds to the alpha subunit of IGF1R, leading to the activation of the intrinsic tyrosine kinase activity which autophosphorylates tyrosine residues in the beta subunit thus initiatiating a cascade of down-stream signaling events leading to activation of the PI3K-AKT/PKB and the Ras-MAPK pathways. Binds to integrins. Its binding to integrins and subsequent ternary complex formation with integrins and IGFR1 are essential for IGF1 signaling. The polypeptide is Insulin-like growth factor 1.S (Xenopus laevis (African clawed frog)).